Here is a 640-residue protein sequence, read N- to C-terminus: UvrABC system protein C (640 aa).

Residues 22-101 form the GIY-YIG domain; that stretch reads NDPGCYLMKD…IKSHQPYFNV (80 aa). Residues 211–246 enclose the UVR domain; the sequence is DELRILLEKQMISFSESLKFEEAGSVRDQLKGIDRL.

The protein belongs to the UvrC family. As to quaternary structure, interacts with UvrB in an incision complex.

It localises to the cytoplasm. The UvrABC repair system catalyzes the recognition and processing of DNA lesions. UvrC both incises the 5' and 3' sides of the lesion. The N-terminal half is responsible for the 3' incision and the C-terminal half is responsible for the 5' incision. The chain is UvrABC system protein C from Prochlorococcus marinus (strain NATL1A).